The primary structure comprises 195 residues: Transmembrane protein 126A (195 aa).

Over 1 to 33 (MENHKSNNKENITIVDISRKINQLPEAERNLLE) the chain is Mitochondrial matrix. A helical membrane pass occupies residues 34–54 (NGSVYVGLNAALCGLIANSLF). The Mitochondrial intermembrane segment spans residues 55 to 56 (RR). The helical transmembrane segment at 57-77 (ILNVTKARIAAGLPMAGIPFL) threads the bilayer. The Mitochondrial matrix segment spans residues 78 to 110 (TTDLTYRCFVSFPLNTGDLDCETCTITRSGLTG). The helical transmembrane segment at 111 to 131 (LVIGGLYPVFLAIPVNGGLAA) threads the bilayer. Residues 132–158 (RYQSALLPHKGNILSYWIRTSKPVFRK) lie on the Mitochondrial intermembrane side of the membrane. The chain crosses the membrane as a helical span at residues 159-175 (MLFPILLQTMFSAYLGS). Residues 176–195 (EQYKLLIKALQLSEPGKEIH) lie on the Mitochondrial matrix side of the membrane.

The protein belongs to the TMEM126 family. As to quaternary structure, interacts with OXA1L; promoting cotranslational quality control in mitochondria. Strongly expressed in brain, cerebellum, skeletal muscle, testis. High expression also found in fetal brain, fetal retinal pigmentary epithelium, and fetal retina. Highly expressed in retinal ganglion cells.

It is found in the mitochondrion inner membrane. Functionally, protein required for the cotranslational protein quality control in the inner membrane of the mitochondria. Associates with newly synthesized polypeptides and may act as a chaperone that cooperates with OXA1L for the insertion of newly synthesized mitochondrial proteins into the inner membrane. Required for the assembly of the ND4 module of mitochondrial complex I. This is Transmembrane protein 126A from Homo sapiens (Human).